Reading from the N-terminus, the 267-residue chain is 5'-nucleotidase SurE (267 aa).

Residues D9, D10, S40, and N97 each contribute to the a divalent metal cation site.

This sequence belongs to the SurE nucleotidase family. Requires a divalent metal cation as cofactor.

Its subcellular location is the cytoplasm. The enzyme catalyses a ribonucleoside 5'-phosphate + H2O = a ribonucleoside + phosphate. Nucleotidase that shows phosphatase activity on nucleoside 5'-monophosphates. The protein is 5'-nucleotidase SurE of Helicobacter pylori (strain G27).